The sequence spans 468 residues: UDP-N-acetylmuramate--L-alanine ligase (468 aa).

ATP is bound at residue 114-120 (GTHGKTT).

It belongs to the MurCDEF family.

It is found in the cytoplasm. It catalyses the reaction UDP-N-acetyl-alpha-D-muramate + L-alanine + ATP = UDP-N-acetyl-alpha-D-muramoyl-L-alanine + ADP + phosphate + H(+). Its pathway is cell wall biogenesis; peptidoglycan biosynthesis. Its function is as follows. Cell wall formation. This is UDP-N-acetylmuramate--L-alanine ligase from Methylobacterium radiotolerans (strain ATCC 27329 / DSM 1819 / JCM 2831 / NBRC 15690 / NCIMB 10815 / 0-1).